The chain runs to 136 residues: Large ribosomal subunit protein uL22 (136 aa).

The protein belongs to the universal ribosomal protein uL22 family. As to quaternary structure, part of the 50S ribosomal subunit.

In terms of biological role, this protein binds specifically to 23S rRNA; its binding is stimulated by other ribosomal proteins, e.g. L4, L17, and L20. It is important during the early stages of 50S assembly. It makes multiple contacts with different domains of the 23S rRNA in the assembled 50S subunit and ribosome. Functionally, the globular domain of the protein is located near the polypeptide exit tunnel on the outside of the subunit, while an extended beta-hairpin is found that lines the wall of the exit tunnel in the center of the 70S ribosome. This chain is Large ribosomal subunit protein uL22, found in Bacteroides fragilis (strain ATCC 25285 / DSM 2151 / CCUG 4856 / JCM 11019 / LMG 10263 / NCTC 9343 / Onslow / VPI 2553 / EN-2).